The following is a 448-amino-acid chain: Phosphoglucosamine mutase (448 aa).

Catalysis depends on S100, which acts as the Phosphoserine intermediate. Mg(2+) contacts are provided by S100, D240, D242, and D244. S100 bears the Phosphoserine mark.

It belongs to the phosphohexose mutase family. The cofactor is Mg(2+). Activated by phosphorylation.

It catalyses the reaction alpha-D-glucosamine 1-phosphate = D-glucosamine 6-phosphate. In terms of biological role, catalyzes the conversion of glucosamine-6-phosphate to glucosamine-1-phosphate. The protein is Phosphoglucosamine mutase of Clostridium tetani (strain Massachusetts / E88).